Consider the following 197-residue polypeptide: Imidazoleglycerol-phosphate dehydratase (197 aa).

It belongs to the imidazoleglycerol-phosphate dehydratase family.

It localises to the cytoplasm. It carries out the reaction D-erythro-1-(imidazol-4-yl)glycerol 3-phosphate = 3-(imidazol-4-yl)-2-oxopropyl phosphate + H2O. It participates in amino-acid biosynthesis; L-histidine biosynthesis; L-histidine from 5-phospho-alpha-D-ribose 1-diphosphate: step 6/9. This is Imidazoleglycerol-phosphate dehydratase from Thioalkalivibrio sulfidiphilus (strain HL-EbGR7).